The chain runs to 2383 residues: Reducing polyketide synthase rdc5 (2383 aa).

Residues 10–438 (RAPIAIIGMS…GTNAHLVLER (429 aa)) form the Ketosynthase family 3 (KS3) domain. Active-site for beta-ketoacyl synthase activity residues include Cys186, His321, and His361. The malonyl-CoA:ACP transacylase (MAT) domain stretch occupies residues 550-881 (FVFTGQGAQW…GFAAELFRRG (332 aa)). The tract at residues 930-1066 (KSLIGAERPS…GLFSINYEDS (137 aa)) is N-terminal hotdog fold. In terms of domain architecture, PKS/mFAS DH spans 930 to 1253 (KSLIGAERPS…LAELEVEDAD (324 aa)). The interval 932-1250 (LIGAERPSLD…DFHLAELEVE (319 aa)) is dehydratase (DH) domain. His962 functions as the Proton acceptor; for dehydratase activity in the catalytic mechanism. The segment at 1094–1253 (VEVISKQAFY…LAELEVEDAD (160 aa)) is C-terminal hotdog fold. Asp1160 functions as the Proton donor; for dehydratase activity in the catalytic mechanism. Positions 1663–1977 (GLLNTLHFVS…QGKHVGKMIL (315 aa)) are enoyl reductase (ER) domain. Cys1776 serves as the catalytic Phosphocysteine intermediate. The interval 2002 to 2182 (ATYLFIGGLG…VSVNLGIMRD (181 aa)) is ketoreductase (KR) domain. The 78-residue stretch at 2300–2377 (AAGPIITKAL…QFAVQIAKKS (78 aa)) folds into the Carrier domain. Ser2337 is modified (O-(pantetheine 4'-phosphoryl)serine).

The protein operates within secondary metabolite biosynthesis. Functionally, reducing polyketide synthase; part of the gene cluster that mediates the biosynthesis of radicicol, a resorcylic acid lactone (RAL) that irreversibly inhibits the HSP90 molecular chaperone, an important target for cancer chemotherapy. The radicicol cluster encodes only two apparent post-PKS enzymes, a cytochrome P450 monooxygenase (rdc4) and a non-heme halogenase (rdc2) that could introduce the epoxide and the chlorine, respectively. If this cluster includes all the genes required for radicicol biosynthesis, the remaining structural features of radicicol are presumably generated by the PKSs rdc1 and rdc5. The C-2' ketone could arise if the R-PKS rdc5 and NR-PKS rdc1 each carry out four iterations, in contrast to the five iteration-three iteration split for the hypothemycin PKSs. The origin of the cis 5',6' double bond is not known. The radicicol R-PKS rdc5 ER domain may catalyze either double bond isomerization or reduction in the third iteration. The protein is Reducing polyketide synthase rdc5 of Metacordyceps chlamydosporia (Nematophagous fungus).